A 142-amino-acid polypeptide reads, in one-letter code: Putative pre-16S rRNA nuclease (142 aa).

Belongs to the YqgF nuclease family.

It localises to the cytoplasm. Functionally, could be a nuclease involved in processing of the 5'-end of pre-16S rRNA. This chain is Putative pre-16S rRNA nuclease, found in Lawsonia intracellularis (strain PHE/MN1-00).